The primary structure comprises 262 residues: ATP synthase subunit a (262 aa).

The next 5 helical transmembrane spans lie at 25–45 (NVHIDTLFFSVLAAIIFLAVF), 86–106 (VAPLALTIFCWVFIMNAIDLI), 130–150 (DISATLGMSLCVFALILFYTV), 204–226 (LIFILIAVMYSANAAIAALGIPL), and 240–260 (LQAFIFMMLTVVYLSIAYNKA).

The protein belongs to the ATPase A chain family. As to quaternary structure, F-type ATPases have 2 components, CF(1) - the catalytic core - and CF(0) - the membrane proton channel. CF(1) has five subunits: alpha(3), beta(3), gamma(1), delta(1), epsilon(1). CF(0) has three main subunits: a(1), b(2) and c(9-12). The alpha and beta chains form an alternating ring which encloses part of the gamma chain. CF(1) is attached to CF(0) by a central stalk formed by the gamma and epsilon chains, while a peripheral stalk is formed by the delta and b chains.

It is found in the cell inner membrane. In terms of biological role, key component of the proton channel; it plays a direct role in the translocation of protons across the membrane. The sequence is that of ATP synthase subunit a from Mannheimia succiniciproducens (strain KCTC 0769BP / MBEL55E).